The primary structure comprises 395 residues: Ribosomal RNA large subunit methyltransferase G (395 aa).

The protein belongs to the methyltransferase superfamily. RlmG family.

Its subcellular location is the cytoplasm. It catalyses the reaction guanosine(1835) in 23S rRNA + S-adenosyl-L-methionine = N(2)-methylguanosine(1835) in 23S rRNA + S-adenosyl-L-homocysteine + H(+). Specifically methylates the guanine in position 1835 (m2G1835) of 23S rRNA. This is Ribosomal RNA large subunit methyltransferase G from Yersinia pseudotuberculosis serotype O:1b (strain IP 31758).